The sequence spans 861 residues: APC membrane recruitment protein 3 (861 aa).

Disordered regions lie at residues M1–G77, A179–E206, P261–Q289, P351–D415, R514–T558, G576–E644, M716–D742, and A786–E822. Polar residues predominate over residues S362–D384. Positions P518–P530 are enriched in pro residues. Positions A584–L595 are enriched in low complexity. Residues D598–S609 show a composition bias toward basic and acidic residues. Polar residues-rich tracts occupy residues S615 to K629 and Q719 to T730.

Belongs to the Amer family.

The protein localises to the cell membrane. Functionally, regulator of the canonical Wnt signaling pathway. Acts by specifically binding phosphatidylinositol 4,5-bisphosphate (PtdIns(4,5)P2), translocating to the cell membrane. The chain is APC membrane recruitment protein 3 (AMER3) from Homo sapiens (Human).